Consider the following 686-residue polypeptide: Rhophilin-2 (686 aa).

The REM-1 domain maps to 26 to 100 (NPLAQTGRSK…LEGLNISVGV (75 aa)). Positions 46-66 (QILKAVRMRTGAENLLKVATN) are interaction with Rho. Residues 111 to 502 (PLIPLGLKET…TDFFQKLGPL (392 aa)) enclose the BRO1 domain. One can recognise a PDZ domain in the interval 515–593 (RGIHFTVEEG…EEVEMKVVSL (79 aa)). The residue at position 655 (T655) is a Phosphothreonine.

It belongs to the RHPN family. In terms of assembly, interacts with GTP-bound RhoA and RhoB. Interacts with both GTP- and GDP-bound RhoA. Interacts with KRT18.

The protein localises to the cytoplasm. It is found in the perinuclear region. Binds specifically to GTP-Rho. May function in a Rho pathway to limit stress fiber formation and/or increase the turnover of F-actin structures in the absence of high levels of RhoA activity. The polypeptide is Rhophilin-2 (Rhpn2) (Mus musculus (Mouse)).